The sequence spans 365 residues: 3-dehydroquinate synthase (365 aa).

NAD(+)-binding positions include 107 to 111 (GVIGD), 131 to 132 (TS), lysine 144, and lysine 153. Zn(2+)-binding residues include glutamate 186, histidine 251, and histidine 268.

This sequence belongs to the sugar phosphate cyclases superfamily. Dehydroquinate synthase family. It depends on Co(2+) as a cofactor. Requires Zn(2+) as cofactor. NAD(+) is required as a cofactor.

The protein localises to the cytoplasm. It carries out the reaction 7-phospho-2-dehydro-3-deoxy-D-arabino-heptonate = 3-dehydroquinate + phosphate. The protein operates within metabolic intermediate biosynthesis; chorismate biosynthesis; chorismate from D-erythrose 4-phosphate and phosphoenolpyruvate: step 2/7. Catalyzes the conversion of 3-deoxy-D-arabino-heptulosonate 7-phosphate (DAHP) to dehydroquinate (DHQ). This Crocosphaera subtropica (strain ATCC 51142 / BH68) (Cyanothece sp. (strain ATCC 51142)) protein is 3-dehydroquinate synthase.